Consider the following 136-residue polypeptide: MLGPTWEPLAPTSMLGLEGPCWVGPGPDGGFAVSEEFGDVQLFGSAHQPLGSLGTLTGHNFGHPAGVCSDAEGSIIVADEQRHQVTLFPRVGPPICLQLEGLKRPLGMACAPQGQLVVADAGDNCIKLYQYLGEMA.

2 NHL repeats span residues Gln-48–Val-91 and Pro-93–Leu-132.

In Mus musculus (Mouse), this protein is NHL-repeat-containing protein 4 (Nhlrc4).